The following is a 469-amino-acid chain: MNPNQKIITIGSVSLTIATVCSLMQIAILATTVTLHFKQHECDSPASNQVMPCEPIIIERNITEIVYLNNTTIEKEICPEVVEYRNWSKPQCQITGFAPFSKDNSIRLSAGGDIWVTREPYVSCDPGKCYQFALGQGTTLDNKHSNGTIHDRIPHRTLLMNELGVPFHLGTKQVCVAWSSSSCHDGKAWLHVCVTGDDRNATASFIYDGRLVDSIGSWSQNILRTQESECVCINGTCTVVMTDGSASGRADTRILFIKEGKIVHISPLSGSAQHIEECSCYPRYPDVRCICRDNWKGSNRPVIDINMEDYSIDSSYVCSGLVGDTPRNDDSSSNSNCRDPNNERGNPGVKGWAFDNGDDVWMGRTISKDSRSGYETFKVIGGWSTPNSKSQVNRQVIVDNNNWSGYSGIFSVEGKSCINRCFYVELIRGRPQETRVWWTSNSIVVFCGTSGTYGTGSWPDGANINFMPI.

Residues 1–6 (MNPNQK) lie on the Intravirion side of the membrane. A helical transmembrane segment spans residues 7-29 (IITIGSVSLTIATVCSLMQIAIL). Residues 11 to 33 (GSVSLTIATVCSLMQIAILATTV) are involved in apical transport and lipid raft association. Over 30–469 (ATTVTLHFKQ…DGANINFMPI (440 aa)) the chain is Virion surface. A hypervariable stalk region region spans residues 36 to 88 (HFKQHECDSPASNQVMPCEPIIIERNITEIVYLNNTTIEKEICPEVVEYRNWS). N-linked (GlcNAc...) asparagine; by host glycosylation is found at Asn-61, Asn-69, Asn-70, and Asn-86. The head of neuraminidase stretch occupies residues 91-469 (QCQITGFAPF…DGANINFMPI (379 aa)). 8 disulfide bridges follow: Cys-92–Cys-417, Cys-124–Cys-129, Cys-183–Cys-230, Cys-232–Cys-237, Cys-278–Cys-291, Cys-280–Cys-289, Cys-318–Cys-337, and Cys-421–Cys-447. Arg-118 provides a ligand contact to substrate. Residue Asn-146 is glycosylated (N-linked (GlcNAc...) asparagine; by host). Residue Asp-151 is the Proton donor/acceptor of the active site. Arg-152 serves as a coordination point for substrate. N-linked (GlcNAc...) asparagine; by host glycans are attached at residues Asn-200 and Asn-234. Residue 276-277 (EE) participates in substrate binding. Arg-292 provides a ligand contact to substrate. Ca(2+)-binding residues include Asp-293, Gly-297, and Asp-324. Residues 325–349 (TPRNDDSSSNSNCRDPNNERGNPGV) form a disordered region. Arg-371 is a binding site for substrate. N-linked (GlcNAc...) asparagine; by host glycosylation occurs at Asn-402. The active-site Nucleophile is Tyr-406.

This sequence belongs to the glycosyl hydrolase 34 family. Homotetramer. It depends on Ca(2+) as a cofactor. In terms of processing, N-glycosylated.

Its subcellular location is the virion membrane. It localises to the host apical cell membrane. The catalysed reaction is Hydrolysis of alpha-(2-&gt;3)-, alpha-(2-&gt;6)-, alpha-(2-&gt;8)- glycosidic linkages of terminal sialic acid residues in oligosaccharides, glycoproteins, glycolipids, colominic acid and synthetic substrates.. Its activity is regulated as follows. Inhibited by the neuraminidase inhibitors zanamivir (Relenza) and oseltamivir (Tamiflu). These drugs interfere with the release of progeny virus from infected cells and are effective against all influenza strains. Resistance to neuraminidase inhibitors is quite rare. Its function is as follows. Catalyzes the removal of terminal sialic acid residues from viral and cellular glycoconjugates. Cleaves off the terminal sialic acids on the glycosylated HA during virus budding to facilitate virus release. Additionally helps virus spread through the circulation by further removing sialic acids from the cell surface. These cleavages prevent self-aggregation and ensure the efficient spread of the progeny virus from cell to cell. Otherwise, infection would be limited to one round of replication. Described as a receptor-destroying enzyme because it cleaves a terminal sialic acid from the cellular receptors. May facilitate viral invasion of the upper airways by cleaving the sialic acid moieties on the mucin of the airway epithelial cells. Likely to plays a role in the budding process through its association with lipid rafts during intracellular transport. May additionally display a raft-association independent effect on budding. Plays a role in the determination of host range restriction on replication and virulence. Sialidase activity in late endosome/lysosome traffic seems to enhance virus replication. This Influenza A virus (strain A/Leningrad/134/17/1957 H2N2) protein is Neuraminidase.